The chain runs to 149 residues: Myoglobin (149 aa).

Residue V2 is modified to N-acetylvaline. Positions 2 to 143 (VDWEKVNSVW…ICSDIEKEYK (142 aa)) constitute a Globin domain. H89 serves as a coordination point for heme b.

This sequence belongs to the globin family. Monomeric.

It localises to the cytoplasm. The protein localises to the sarcoplasm. The catalysed reaction is Fe(III)-heme b-[protein] + nitric oxide + H2O = Fe(II)-heme b-[protein] + nitrite + 2 H(+). It catalyses the reaction H2O2 + AH2 = A + 2 H2O. Its function is as follows. Monomeric heme protein which primary function is to store oxygen and facilitate its diffusion within muscle tissues. Reversibly binds oxygen through a pentacoordinated heme iron and enables its timely and efficient release as needed during periods of heightened demand. Depending on the oxidative conditions of tissues and cells, and in addition to its ability to bind oxygen, it also has a nitrite reductase activity whereby it regulates the production of bioactive nitric oxide. Under stress conditions, like hypoxia and anoxia, it also protects cells against reactive oxygen species thanks to its pseudoperoxidase activity. The polypeptide is Myoglobin (mb) (Mustelus antarcticus (Gummy shark)).